A 132-amino-acid chain; its full sequence is Cytochrome b5 (132 aa).

The 77-residue stretch at 2–78 (GKIFTLAEVA…LDEYYVGDID (77 aa)) folds into the Cytochrome b5 heme-binding domain. Heme is bound by residues His37 and His61. The helical transmembrane segment at 104–124 (FVIKLLQFLVPLVILAGAIGI) threads the bilayer.

It belongs to the cytochrome b5 family.

The protein localises to the endoplasmic reticulum membrane. Its subcellular location is the microsome membrane. Membrane bound hemoprotein which function as an electron carrier for several membrane bound oxygenases. The protein is Cytochrome b5 of Borago officinalis (Bourrache).